The following is a 291-amino-acid chain: Formamidopyrimidine-DNA glycosylase (291 aa).

Pro2 (schiff-base intermediate with DNA) is an active-site residue. Glu3 (proton donor) is an active-site residue. The Proton donor; for beta-elimination activity role is filled by Lys58. DNA is bound by residues His104, Arg123, and Lys166. Residues 257–291 (KVYDREGEPCPTCGGTVQRFVQNGRSTFWCPKCQK) form an FPG-type zinc finger. Arg281 acts as the Proton donor; for delta-elimination activity in catalysis.

This sequence belongs to the FPG family. In terms of assembly, monomer. It depends on Zn(2+) as a cofactor.

The enzyme catalyses Hydrolysis of DNA containing ring-opened 7-methylguanine residues, releasing 2,6-diamino-4-hydroxy-5-(N-methyl)formamidopyrimidine.. The catalysed reaction is 2'-deoxyribonucleotide-(2'-deoxyribose 5'-phosphate)-2'-deoxyribonucleotide-DNA = a 3'-end 2'-deoxyribonucleotide-(2,3-dehydro-2,3-deoxyribose 5'-phosphate)-DNA + a 5'-end 5'-phospho-2'-deoxyribonucleoside-DNA + H(+). Involved in base excision repair of DNA damaged by oxidation or by mutagenic agents. Acts as a DNA glycosylase that recognizes and removes damaged bases. Has a preference for oxidized purines, such as 7,8-dihydro-8-oxoguanine (8-oxoG). Has AP (apurinic/apyrimidinic) lyase activity and introduces nicks in the DNA strand. Cleaves the DNA backbone by beta-delta elimination to generate a single-strand break at the site of the removed base with both 3'- and 5'-phosphates. The protein is Formamidopyrimidine-DNA glycosylase of Rhodopseudomonas palustris (strain ATCC BAA-98 / CGA009).